Here is an 876-residue protein sequence, read N- to C-terminus: ATP-dependent helicase Lhr-Core (876 aa).

ATP is bound by residues Gln37, Lys60, Thr61, Asp175, Glu176, Arg374, and His377. In terms of domain architecture, Helicase ATP-binding spans 41-232; sequence IPLIKKGKNV…FLVGGNGDYE (192 aa). The DEAH box signature appears at 175 to 178; sequence DEIH. One can recognise a Helicase C-terminal domain in the interval 249–421; that stretch reads PVKDLVHATE…NIHVPENPLD (173 aa). Residues 422-506 form a WH domain region; that stretch reads VLTQLIVAAS…IFFLNSGTIP (85 aa). Residues 507 to 876 are domain 4; sequence DEAMIPVKME…DLEYTEAGIK (370 aa).

The protein belongs to the Lhr helicase family. Lhr-Core subfamily. Monomer.

It carries out the reaction Couples ATP hydrolysis with the unwinding of duplex DNA by translocating in the 3'-5' direction.. The enzyme catalyses ATP + H2O = ADP + phosphate + H(+). Probably part of a 4-gene DNA damage response locus in which the upstream ups system, in combination with this downstream locus, functions in homologous recombination to rescue Sulfolobales from DNA-damaging threats. DNA helicase that translocates in a 3'-5' direction on single-stranded (ss)DNA. Binds Holliday junction (HJ) DNA, Y-shaped DNA, DNA with a 3'-overhang and single-stranded (ss)DNA with high affinity; binds double-stranded (ds)DNA with less affinity. Has helicase activity on DNA with a 3'-overhang, Y-shaped DNA and HJ DNA. Does not unwind blunt-ended dsDNA or DNA with a 5'-overhang. This is ATP-dependent helicase Lhr-Core from Sulfolobus acidocaldarius (strain ATCC 33909 / DSM 639 / JCM 8929 / NBRC 15157 / NCIMB 11770).